A 203-amino-acid chain; its full sequence is UPF0637 protein MCCL_0722 (203 aa).

It belongs to the UPF0637 family.

In Macrococcus caseolyticus (strain JCSC5402) (Macrococcoides caseolyticum), this protein is UPF0637 protein MCCL_0722.